The sequence spans 510 residues: NAD(P)H-quinone oxidoreductase subunit 2 B, chloroplastic (510 aa).

13 consecutive transmembrane segments (helical) span residues 24-44, 57-77, 99-119, 124-144, 149-169, 183-203, 227-247, 295-315, 323-343, 354-374, 395-415, 418-438, and 484-504; these read LLLF…GLIL, IPWL…SLLF, IFQF…VEYI, MAIT…MFLC, LITI…LSGY, YLLM…WLYG, PGIS…LSPA, WHLL…LIAI, MLAY…IVGD, YMLF…LFGL, ALSL…AGFF, LYLF…IGLL, and MIVC…IIAI.

It belongs to the complex I subunit 2 family. NDH is composed of at least 16 different subunits, 5 of which are encoded in the nucleus.

The protein resides in the plastid. It is found in the chloroplast thylakoid membrane. It carries out the reaction a plastoquinone + NADH + (n+1) H(+)(in) = a plastoquinol + NAD(+) + n H(+)(out). The catalysed reaction is a plastoquinone + NADPH + (n+1) H(+)(in) = a plastoquinol + NADP(+) + n H(+)(out). NDH shuttles electrons from NAD(P)H:plastoquinone, via FMN and iron-sulfur (Fe-S) centers, to quinones in the photosynthetic chain and possibly in a chloroplast respiratory chain. The immediate electron acceptor for the enzyme in this species is believed to be plastoquinone. Couples the redox reaction to proton translocation, and thus conserves the redox energy in a proton gradient. The polypeptide is NAD(P)H-quinone oxidoreductase subunit 2 B, chloroplastic (Lactuca sativa (Garden lettuce)).